A 94-amino-acid chain; its full sequence is Pyrimidine/purine nucleoside phosphorylase (94 aa).

The protein belongs to the nucleoside phosphorylase PpnP family.

It carries out the reaction a purine D-ribonucleoside + phosphate = a purine nucleobase + alpha-D-ribose 1-phosphate. It catalyses the reaction adenosine + phosphate = alpha-D-ribose 1-phosphate + adenine. The catalysed reaction is cytidine + phosphate = cytosine + alpha-D-ribose 1-phosphate. The enzyme catalyses guanosine + phosphate = alpha-D-ribose 1-phosphate + guanine. It carries out the reaction inosine + phosphate = alpha-D-ribose 1-phosphate + hypoxanthine. It catalyses the reaction thymidine + phosphate = 2-deoxy-alpha-D-ribose 1-phosphate + thymine. The catalysed reaction is uridine + phosphate = alpha-D-ribose 1-phosphate + uracil. The enzyme catalyses xanthosine + phosphate = alpha-D-ribose 1-phosphate + xanthine. Functionally, catalyzes the phosphorolysis of diverse nucleosides, yielding D-ribose 1-phosphate and the respective free bases. Can use uridine, adenosine, guanosine, cytidine, thymidine, inosine and xanthosine as substrates. Also catalyzes the reverse reactions. The sequence is that of Pyrimidine/purine nucleoside phosphorylase from Saccharophagus degradans (strain 2-40 / ATCC 43961 / DSM 17024).